We begin with the raw amino-acid sequence, 1957 residues long: Chromatin modification-related protein EAF1 A (1957 aa).

Disordered regions lie at residues 108–208, 261–287, 323–373, and 449–469; these read ASPH…TDLV, NRVSSNSLNTKVDGEPVVRESTAGSKT, GGSP…SHAN, and NQSHRSTAEMQTKEKSSETEK. Residues 140 to 151 are compositionally biased toward basic and acidic residues; that stretch reads SENKSVEGERNL. 3 stretches are compositionally biased toward polar residues: residues 261–270, 333–342, and 355–372; these read NRVSSNSLNT, GQKNSSTQLN, and TNRGATGTNGLESESSHA. The region spanning 563-641 is the HSA domain; sequence CGTAPVEVRE…LSNAILQFWS (79 aa). Disordered regions lie at residues 833-909 and 928-950; these read GSNS…AVQK and AETSGRPKKKKKTHQGSAYDQTW. Residues 884–898 show a composition bias toward polar residues; it reads TDASSGDTSSFQDEY. The SANT domain occupies 1049-1105; that stretch reads SGNPWSLFEDQALVVLVHDMGPNWELISDAMNSTLKIKCIYRNPTECKDRHKILMDK. 7 disordered regions span residues 1107 to 1131, 1282 to 1314, 1344 to 1367, 1449 to 1644, 1687 to 1768, 1804 to 1840, and 1876 to 1957; these read AGDGADSAEDSGNSQSYPSTLPGIP, TPVLPTSGAHPSTPGSSGVVLSNNLPTTSGLQS, LSGRNLQQPSLSTPAAVSGSDRGH, QGNS…QQLN, PVRP…IAPA, ELSKKSQAERMPRVPQSVTNTTQTVSMGTTKGMPQAS, and SSNT…TKVE. 6 stretches are compositionally biased toward polar residues: residues 1116-1125, 1290-1314, 1344-1358, 1459-1472, 1479-1492, and 1501-1510; these read DSGNSQSYPS, AHPSTPGSSGVVLSNNLPTTSGLQS, LSGRNLQQPSLSTPA, SNLSSGFTNQTTPV, LSQQHQMSPQSHVL, and QSPSQATGAQ. Composition is skewed to low complexity over residues 1523–1534 and 1545–1562; these read QRYLQQQQQQQQ and VQQPQGSSVSSSPQNSPQ. Over residues 1563–1579 the composition is skewed to pro residues; it reads TQPPVSPQPLSMPPVSP. 5 stretches are compositionally biased toward polar residues: residues 1582–1595, 1604–1618, 1635–1644, 1691–1722, and 1734–1758; these read NINAMAQQKPQKSQ, SPQSGTSGVNNQAGK, RQPTQGQQLN, DQQSSVGTTTSTNLQSKPFVSPLSSNHSQQLP, and QQQMQLHSDNSIQGQSSPATPCNIL. Positions 1759–1768 are enriched in low complexity; it reads STSSPSIAPA. Residues 1805–1815 show a composition bias toward basic and acidic residues; the sequence is LSKKSQAERMP. 2 stretches are compositionally biased toward polar residues: residues 1819 to 1832 and 1876 to 1894; these read QSVTNTTQTVSMGT and SSNTDSAGNDPVSTPNQGL. 2 stretches are compositionally biased toward basic and acidic residues: residues 1913–1922 and 1932–1942; these read SEEKRPKLPE and LASEEQPHLEE.

It belongs to the EAF1 family. As to quaternary structure, component of the NuA4 histone acetyltransferase complex. Interacts with ARP4 and SWC4, and (via HSA domain) with TAF14 and TAF14B. Expressed in leaves.

Its subcellular location is the nucleus. Functionally, component of the NuA4 histone acetyltransferase complex which is involved in transcriptional activation of selected genes principally by acetylation of nucleosomal histone H4 and H2A. In Arabidopsis thaliana (Mouse-ear cress), this protein is Chromatin modification-related protein EAF1 A (EAF1A).